Reading from the N-terminus, the 854-residue chain is Protein ROOT HAIR DEFECTIVE 3 homolog 1 (854 aa).

Over 1 to 680 (MDEAAAAEAV…QAHKRGNGRL (680 aa)) the chain is Cytoplasmic. The GB1/RHD3-type G domain occupies 37 to 252 (GLSYAVVSIM…IAPGGLAGDR (216 aa)). 47–54 (GPQSSGKS) serves as a coordination point for GTP. A coiled-coil region spans residues 217-242 (ALPSFEEKEEQFREQVQQLRQRFSNS). A helical transmembrane segment spans residues 681 to 701 (PPPWAMVAIAVLGFNEIMTLL). Topologically, residues 702-704 (RNP) are lumenal. A helical membrane pass occupies residues 705–725 (IYLFLLFVGYLLVKALAVQLD). Residues 726–854 (INREFQNGVV…NESNNAYSIV (129 aa)) are Cytoplasmic-facing. 2 stretches are compositionally biased toward low complexity: residues 758–781 (TEQQ…QQQP) and 814–828 (VSPS…VTSP). The segment at 758 to 854 (TEQQQQQGHH…NESNNAYSIV (97 aa)) is disordered. Over residues 842–854 (QPDNESNNAYSIV) the composition is skewed to polar residues.

It belongs to the TRAFAC class dynamin-like GTPase superfamily. GB1/RHD3 GTPase family. RHD3 subfamily.

The protein resides in the endoplasmic reticulum membrane. Probable GTP-binding protein that may be involved in cell development. This chain is Protein ROOT HAIR DEFECTIVE 3 homolog 1, found in Oryza sativa subsp. japonica (Rice).